A 211-amino-acid polypeptide reads, in one-letter code: Uracil phosphoribosyltransferase (211 aa).

Residues Arg-79, Arg-104, and Asp-131–Ser-139 contribute to the 5-phospho-alpha-D-ribose 1-diphosphate site. Uracil-binding positions include Ile-196 and Gly-201–Ala-203. A 5-phospho-alpha-D-ribose 1-diphosphate-binding site is contributed by Asp-202.

It belongs to the UPRTase family. It depends on Mg(2+) as a cofactor.

The enzyme catalyses UMP + diphosphate = 5-phospho-alpha-D-ribose 1-diphosphate + uracil. The protein operates within pyrimidine metabolism; UMP biosynthesis via salvage pathway; UMP from uracil: step 1/1. Allosterically activated by GTP. Catalyzes the conversion of uracil and 5-phospho-alpha-D-ribose 1-diphosphate (PRPP) to UMP and diphosphate. The polypeptide is Uracil phosphoribosyltransferase (Lactococcus lactis subsp. cremoris (strain MG1363)).